We begin with the raw amino-acid sequence, 177 residues long: Nucleoside triphosphate/diphosphate phosphatase (177 aa).

R23 (proton donor) is an active-site residue. Positions 87, 103, 105, 107, 120, and 123 each coordinate Mg(2+).

This sequence belongs to the Ntdp family. It depends on Mg(2+) as a cofactor.

It catalyses the reaction a ribonucleoside 5'-triphosphate + H2O = a ribonucleoside 5'-diphosphate + phosphate + H(+). It carries out the reaction a ribonucleoside 5'-diphosphate + H2O = a ribonucleoside 5'-phosphate + phosphate + H(+). In terms of biological role, has nucleoside phosphatase activity towards nucleoside triphosphates and nucleoside diphosphates. The polypeptide is Nucleoside triphosphate/diphosphate phosphatase (Streptococcus agalactiae serotype Ia (strain ATCC 27591 / A909 / CDC SS700)).